The chain runs to 415 residues: G patch domain-containing protein 4 (415 aa).

Methionine 1 carries the post-translational modification N-acetylmethionine. A Phosphothreonine modification is found at threonine 4. Residues glycine 11 to alanine 57 form the G-patch domain. A Glycyl lysine isopeptide (Lys-Gly) (interchain with G-Cter in SUMO2) cross-link involves residue lysine 46. The residue at position 116 (threonine 116) is a Phosphothreonine. Disordered stretches follow at residues threonine 116–lysine 141 and leucine 191–serine 415. The span at glycine 118–lysine 141 shows a compositional bias: basic and acidic residues. The residue at position 130 (serine 130) is a Phosphoserine. Polar residues predominate over residues leucine 191–glutamate 201. The span at serine 224 to aspartate 239 shows a compositional bias: basic and acidic residues. The residue at position 258 (serine 258) is a Phosphoserine. A compositionally biased stretch (acidic residues) spans glutamate 335–lysine 345. Residues arginine 353–glutamine 364 are compositionally biased toward basic residues. Over residues alanine 387–glutamate 397 the composition is skewed to basic and acidic residues. Residues arginine 398 to aspartate 407 show a composition bias toward basic residues.

This Mus musculus (Mouse) protein is G patch domain-containing protein 4 (Gpatch4).